The chain runs to 245 residues: MTLDVDAQKKDEKLLLATIHQEYKILAEYKMIESEKVSGIYVIPSYANSLQWFGVFFGRQGFYENSVFRFSILLPDGFPQDKTTPAIVFQQNVVHPLVCPFTNSLDISHAFPEWRCGEDHLWQVLKYMQVIFADPLECIRSVGSTQELSNVEASKLLTTNRDAFAALVQESIAESKAHIYDTPPTEDPHYIVFEKFQEDIHGPVLEQIRNGRTTNSPAESGGGGAATGLSWVKVKEGEFKPLSIE.

Positions 20 to 177 (HQEYKILAEY…VQESIAESKA (158 aa)) constitute a UBC core domain.

It belongs to the ubiquitin-conjugating enzyme family. FTS subfamily.

The polypeptide is Protein crossbronx (cbx) (Drosophila mojavensis (Fruit fly)).